The primary structure comprises 34 residues: Trypsin inhibitor 1 (34 aa).

The segment at residues 1–34 is a cross-link (cyclopeptide (Ser-Gly)); sequence SGSDGGVCPKILQRCRRDSDCPGACICRGNGYCG. Disulfide bonds link Cys-8–Cys-25, Cys-15–Cys-27, and Cys-21–Cys-33.

Post-translationally, this is a cyclic peptide.

It is found in the secreted. Inhibits trypsin; probably participates in a plant defense mechanism. In Momordica cochinchinensis (Spiny bitter cucumber), this protein is Trypsin inhibitor 1.